Reading from the N-terminus, the 1389-residue chain is uncharacterized protein (1389 aa).

A coiled-coil region spans residues 43–94; that stretch reads STIAQRVSQLENEVAEINVALAEHVNELNSQEKRIDKLEKTVKKKKSNCSDD. Residues 294-353 are disordered; that stretch reads HKNRRSKSDNSDLSEYSSSNSDDSECTDSDGSSCSTDGSPDCTESENTESHRSHGKKKHR. 2 stretches are compositionally biased toward low complexity: residues 304–314 and 322–335; these read SDLSEYSSSNS and SDGSSCSTDGSPDC. 3 WD repeats span residues 867–907, 1017–1056, and 1115–1156; these read TFTD…VKHI, GYNEGLDIKYSPDQTIVVSGYYNTNPLIIYDGPDGLTPSG, and GISN…ILST.

It is found in the virion. This is an uncharacterized protein from Acanthamoeba polyphaga (Amoeba).